Consider the following 224-residue polypeptide: UPF0758 protein Pfl01_5539 (224 aa).

In terms of domain architecture, MPN spans 102–224 (ALENPQVVRD…PLSMAECGWM (123 aa)). The Zn(2+) site is built by His173, His175, and Asp186. The short motif at 173–186 (HNHPSGNSDPSQAD) is the JAMM motif element.

The protein belongs to the UPF0758 family.

The sequence is that of UPF0758 protein Pfl01_5539 from Pseudomonas fluorescens (strain Pf0-1).